Reading from the N-terminus, the 347-residue chain is Protein POOR HOMOLOGOUS SYNAPSIS 1 (347 aa).

The protein resides in the cytoplasm. Functionally, required for accurate chromosome segregation in meiosis. Required for pairing to occur between homologous chromosomes. Acts in early recombination steps and ensures pairing fidelity and proper repair of meiotic DNA double-strand-breaks. Regulates recombination and pairing of homologous chromosomes during meiotic prophase by controlling transport of RAD50 from cytoplasm to the nucleus. May affect pairing of the gene-rich fraction of the genome rather than preventing pairing between repetitive DNA elements. The protein is Protein POOR HOMOLOGOUS SYNAPSIS 1 of Zea mays (Maize).